The chain runs to 447 residues: Phosphoglucosamine mutase (447 aa).

The active-site Phosphoserine intermediate is the serine 101. Serine 101, aspartate 242, aspartate 244, and aspartate 246 together coordinate Mg(2+). The residue at position 101 (serine 101) is a Phosphoserine.

This sequence belongs to the phosphohexose mutase family. Requires Mg(2+) as cofactor. Post-translationally, activated by phosphorylation.

The enzyme catalyses alpha-D-glucosamine 1-phosphate = D-glucosamine 6-phosphate. Its function is as follows. Catalyzes the conversion of glucosamine-6-phosphate to glucosamine-1-phosphate. This Xanthobacter autotrophicus (strain ATCC BAA-1158 / Py2) protein is Phosphoglucosamine mutase.